We begin with the raw amino-acid sequence, 478 residues long: ATP synthase subunit beta (478 aa).

155-162 (GGAGVGKT) is a binding site for ATP.

It belongs to the ATPase alpha/beta chains family. As to quaternary structure, F-type ATPases have 2 components, CF(1) - the catalytic core - and CF(0) - the membrane proton channel. CF(1) has five subunits: alpha(3), beta(3), gamma(1), delta(1), epsilon(1). CF(0) has three main subunits: a(1), b(2) and c(9-12). The alpha and beta chains form an alternating ring which encloses part of the gamma chain. CF(1) is attached to CF(0) by a central stalk formed by the gamma and epsilon chains, while a peripheral stalk is formed by the delta and b chains.

It is found in the cell inner membrane. The catalysed reaction is ATP + H2O + 4 H(+)(in) = ADP + phosphate + 5 H(+)(out). In terms of biological role, produces ATP from ADP in the presence of a proton gradient across the membrane. The catalytic sites are hosted primarily by the beta subunits. This Fuscovulum blasticum (Rhodobacter blasticus) protein is ATP synthase subunit beta.